The primary structure comprises 22 residues: MICOS complex subunit MIC60 (22 aa).

Belongs to the MICOS complex subunit Mic60 family. As to quaternary structure, component of the mitochondrial contact site and cristae organizing system (MICOS) complex, composed of at least MICOS10/MIC10, CHCHD3/MIC19, CHCHD6/MIC25, APOOL/MIC27, IMMT/MIC60, APOO/MIC23/MIC26 and MICOS13/MIC13. This complex was also known under the names MINOS or MitOS complex. The MICOS complex associates with mitochondrial outer membrane proteins SAMM50, MTX1 and MTX2 (together described as components of the mitochondrial outer membrane sorting assembly machinery (SAM) complex) and DNAJC11, mitochondrial inner membrane protein TMEM11 and with HSPA9. The MICOS and SAM complexes together with DNAJC11 are part of a large protein complex spanning both membranes termed the mitochondrial intermembrane space bridging (MIB) complex. Interacts with HSPA1A/HSPA1B and OPA1, preferentially with the soluble OPA1 form. Interacts with MICOS13/MIC13, MICOS10/MIC10, CHCHD3/MIC19, CHCHD6/MIC25, SAMM50 and TMEM11. Interacts with APOO/MIC23/MIC26 and APOOL/MIC27. Interacts with ARMC1. Interacts with ARMC12.

It localises to the mitochondrion inner membrane. The protein resides in the mitochondrion. Component of the MICOS complex, a large protein complex of the mitochondrial inner membrane that plays crucial roles in the maintenance of crista junctions, inner membrane architecture, and formation of contact sites to the outer membrane. Plays an important role in the maintenance of the MICOS complex stability and the mitochondrial cristae morphology. In Mesocricetus auratus (Golden hamster), this protein is MICOS complex subunit MIC60.